A 409-amino-acid chain; its full sequence is Nucleoprotein (409 aa).

4 disordered regions span residues 1-32 (MASG…SSGN), 44-63 (LNSP…ENLK), 120-145 (GADT…LRFS), and 164-193 (RSGR…SGAE). Positions 15–31 (PVIKLGGPKPPKVGSSG) are enriched in low complexity. Positions 29–160 (SSGNASWFQA…GNFRWDFIPI (132 aa)) are RNA-binding. One can recognise a CoV N NTD domain in the interval 31-156 (GNASWFQALK…GGPDGNFRWD (126 aa)). Positions 164–179 (RSGRSTAASSAASSRA) are enriched in low complexity. Positions 180-192 (PSRDGSRGRRSGA) are enriched in basic and acidic residues. S190 carries the phosphoserine; by host modification. In terms of domain architecture, CoV N CTD spans 215–331 (TKAKADEMAH…QCVDGVGTRP (117 aa)). Positions 226-333 (RYCKRTIPPG…VDGVGTRPKD (108 aa)) are dimerization. C320 and C323 are oxidised to a cystine. Residues 326–409 (GVGTRPKDDE…GDSALGENEL (84 aa)) form a disordered region. Residues 341–355 (RPNSRPATRTSSPAP) show a composition bias toward polar residues. The span at 358-367 (QRQKKEKKSK) shows a compositional bias: basic residues. Residues 368–384 (KQDDEVDKALTSDEERN) are compositionally biased toward basic and acidic residues. Residue T378 is modified to Phosphothreonine; by host. Phosphoserine; by host is present on S379.

This sequence belongs to the gammacoronavirus nucleocapsid protein family. As to quaternary structure, homooligomer. Both monomeric and oligomeric forms interact with RNA. Interacts with protein M. Interacts with NSP3; this interaction serves to tether the genome to the newly translated replicase-transcriptase complex at a very early stage of infection. In terms of processing, ADP-ribosylated. The ADP-ribosylation is retained in the virion during infection. Phosphorylated on serine and threonine residues.

Its subcellular location is the virion. It localises to the host endoplasmic reticulum-Golgi intermediate compartment. It is found in the host Golgi apparatus. In terms of biological role, packages the positive strand viral genome RNA into a helical ribonucleocapsid (RNP) and plays a fundamental role during virion assembly through its interactions with the viral genome and membrane protein M. Plays an important role in enhancing the efficiency of subgenomic viral RNA transcription as well as viral replication. This is Nucleoprotein from Avian infectious bronchitis virus (strain H120) (IBV).